We begin with the raw amino-acid sequence, 312 residues long: Ribosomal protein L11 methyltransferase (312 aa).

Positions 160, 181, 203, and 246 each coordinate S-adenosyl-L-methionine.

Belongs to the methyltransferase superfamily. PrmA family.

The protein resides in the cytoplasm. The catalysed reaction is L-lysyl-[protein] + 3 S-adenosyl-L-methionine = N(6),N(6),N(6)-trimethyl-L-lysyl-[protein] + 3 S-adenosyl-L-homocysteine + 3 H(+). Functionally, methylates ribosomal protein L11. This Staphylococcus epidermidis (strain ATCC 12228 / FDA PCI 1200) protein is Ribosomal protein L11 methyltransferase.